The following is a 330-amino-acid chain: Protein RfbI (330 aa).

The 87-residue stretch at 3–89 folds into the 2Fe-2S ferredoxin-type domain; the sequence is HIIKIFPSNI…ELNAHFFPEL (87 aa). [2Fe-2S] cluster contacts are provided by C37, C42, and C45. An FAD-binding FR-type domain is found at 94 to 192; sequence KKIVPCKVNS…EGPCGTFFIR (99 aa).

[2Fe-2S] cluster serves as cofactor.

Its pathway is bacterial outer membrane biogenesis; LPS O-antigen biosynthesis. This Salmonella typhimurium (strain LT2 / SGSC1412 / ATCC 700720) protein is Protein RfbI (rfbI).